A 344-amino-acid polypeptide reads, in one-letter code: MSIKPIEYRDGVVRMIDQRLLPTQELWLEYRDYQAVAEAILTMVVRGAPAIGVAAAYGAALGARDIEADSFESFLAALKNVCDTLAATRPTAVNLFWALERMQAKARELAALPLDAIKAALMDEAQAIAAQDDAINRAMGRHGAELIADNARVLTHCNAGALATGGYGTALGVIRAAVESGKKISVLADETRPFLQGSRLTAWELHKDGIPVTLICDNMAGALMRQGEIDCVIVGADRIAANGDVANKIGTYSVAVLAKEHGLPFYVAAPLSTIDLKIPDGDHIPIEERDTSEVTHCGPTRLAPEGINVRNPAFDVTPAGLITAIITERGVVRGDYVRGLANLF.

Substrate is bound by residues 46–48 (RGA), R89, and Q196. The Proton donor role is filled by D237. 247-248 (NK) contributes to the substrate binding site.

This sequence belongs to the eIF-2B alpha/beta/delta subunits family. MtnA subfamily.

The enzyme catalyses 5-(methylsulfanyl)-alpha-D-ribose 1-phosphate = 5-(methylsulfanyl)-D-ribulose 1-phosphate. It participates in amino-acid biosynthesis; L-methionine biosynthesis via salvage pathway; L-methionine from S-methyl-5-thio-alpha-D-ribose 1-phosphate: step 1/6. Catalyzes the interconversion of methylthioribose-1-phosphate (MTR-1-P) into methylthioribulose-1-phosphate (MTRu-1-P). This Syntrophotalea carbinolica (strain DSM 2380 / NBRC 103641 / GraBd1) (Pelobacter carbinolicus) protein is Methylthioribose-1-phosphate isomerase.